We begin with the raw amino-acid sequence, 279 residues long: 2'-N-acetylparomamine deacetylase (279 aa).

Residues His31, Asp34, and His157 each coordinate Zn(2+). Residues 245–279 are disordered; sequence PRRWTGGTAGAGHAAGRRGAPHTERVWTPAPAGAR. The span at 246 to 258 shows a compositional bias: low complexity; the sequence is RRWTGGTAGAGHA.

The protein belongs to the PIGL family. It depends on Zn(2+) as a cofactor.

It catalyses the reaction 2'-N-acetylparomamine + H2O = paromamine + acetate. The enzyme catalyses 2'''-acetyl-6'''-hydroxyneomycin C + H2O = 6'''-deamino-6'''-hydroxyneomycin C + acetate. The protein operates within antibiotic biosynthesis; neomycin biosynthesis. Functionally, deacetylase involved in the biosynthesis of neomycin by mediating 2 steps of the pathway. Deacetylates both 2'-N-acetylparomamine and 2'''-acetyl-6'''-hydroxyneomycin C. This Streptomyces fradiae (Streptomyces roseoflavus) protein is 2'-N-acetylparomamine deacetylase (neoL).